Here is a 570-residue protein sequence, read N- to C-terminus: Sulfite reductase [NADPH] hemoprotein beta-component (570 aa).

Residues Cys-434, Cys-440, Cys-479, and Cys-483 each coordinate [4Fe-4S] cluster. Cys-483 provides a ligand contact to siroheme.

It belongs to the nitrite and sulfite reductase 4Fe-4S domain family. As to quaternary structure, alpha(8)-beta(8). The alpha component is a flavoprotein, the beta component is a hemoprotein. Siroheme serves as cofactor. The cofactor is [4Fe-4S] cluster.

It catalyses the reaction hydrogen sulfide + 3 NADP(+) + 3 H2O = sulfite + 3 NADPH + 4 H(+). The protein operates within sulfur metabolism; hydrogen sulfide biosynthesis; hydrogen sulfide from sulfite (NADPH route): step 1/1. Its function is as follows. Component of the sulfite reductase complex that catalyzes the 6-electron reduction of sulfite to sulfide. This is one of several activities required for the biosynthesis of L-cysteine from sulfate. The polypeptide is Sulfite reductase [NADPH] hemoprotein beta-component (Escherichia coli O7:K1 (strain IAI39 / ExPEC)).